The following is a 315-amino-acid chain: Glycine--tRNA ligase alpha subunit (315 aa).

It belongs to the class-II aminoacyl-tRNA synthetase family. As to quaternary structure, tetramer of two alpha and two beta subunits.

The protein localises to the cytoplasm. The catalysed reaction is tRNA(Gly) + glycine + ATP = glycyl-tRNA(Gly) + AMP + diphosphate. This chain is Glycine--tRNA ligase alpha subunit, found in Pseudomonas putida (strain GB-1).